Here is a 194-residue protein sequence, read N- to C-terminus: Fibroblast growth factor 4 (194 aa).

The first 23 residues, 1 to 23 (MLSAAALLPALLLGLLWPGAVRG), serve as a signal peptide directing secretion.

This sequence belongs to the heparin-binding growth factors family. In terms of assembly, reciprocal interactions may create a positive feedback loop between sonic hedgehog (SHH) and FGF4. In terms of tissue distribution, posterior ridge.

The protein resides in the secreted. Plays an important role in the regulation of embryonic development, cell proliferation, and cell differentiation. Required for normal limb development during embryogenesis. The polypeptide is Fibroblast growth factor 4 (FGF4) (Gallus gallus (Chicken)).